The chain runs to 147 residues: Large ribosomal subunit protein uL13 (147 aa).

This sequence belongs to the universal ribosomal protein uL13 family. In terms of assembly, part of the 50S ribosomal subunit.

Its function is as follows. This protein is one of the early assembly proteins of the 50S ribosomal subunit, although it is not seen to bind rRNA by itself. It is important during the early stages of 50S assembly. This Leuconostoc citreum (strain KM20) protein is Large ribosomal subunit protein uL13.